The following is an 87-amino-acid chain: Large ribosomal subunit protein bL28 (87 aa).

The protein belongs to the bacterial ribosomal protein bL28 family.

In Akkermansia muciniphila (strain ATCC BAA-835 / DSM 22959 / JCM 33894 / BCRC 81048 / CCUG 64013 / CIP 107961 / Muc), this protein is Large ribosomal subunit protein bL28.